Consider the following 393-residue polypeptide: Formate-dependent phosphoribosylglycinamide formyltransferase (393 aa).

N(1)-(5-phospho-beta-D-ribosyl)glycinamide-binding positions include 22 to 23 and glutamate 82; that span reads EL. ATP is bound by residues arginine 114, lysine 155, 160-165, 195-198, and glutamate 203; these read SSGKGQ and EGFI. Residues 119–308 enclose the ATP-grasp domain; sequence RLAAEELKLP…QFALHARAIL (190 aa). Mg(2+) contacts are provided by glutamate 267 and glutamate 279. Residues aspartate 286, lysine 356, and 363–364 contribute to the N(1)-(5-phospho-beta-D-ribosyl)glycinamide site; that span reads RR.

This sequence belongs to the PurK/PurT family. As to quaternary structure, homodimer.

The enzyme catalyses N(1)-(5-phospho-beta-D-ribosyl)glycinamide + formate + ATP = N(2)-formyl-N(1)-(5-phospho-beta-D-ribosyl)glycinamide + ADP + phosphate + H(+). It participates in purine metabolism; IMP biosynthesis via de novo pathway; N(2)-formyl-N(1)-(5-phospho-D-ribosyl)glycinamide from N(1)-(5-phospho-D-ribosyl)glycinamide (formate route): step 1/1. Involved in the de novo purine biosynthesis. Catalyzes the transfer of formate to 5-phospho-ribosyl-glycinamide (GAR), producing 5-phospho-ribosyl-N-formylglycinamide (FGAR). Formate is provided by PurU via hydrolysis of 10-formyl-tetrahydrofolate. This chain is Formate-dependent phosphoribosylglycinamide formyltransferase, found in Pseudomonas syringae pv. tomato (strain ATCC BAA-871 / DC3000).